We begin with the raw amino-acid sequence, 455 residues long: Chromosomal replication initiator protein DnaA 2 (455 aa).

The domain I, interacts with DnaA modulators stretch occupies residues 1 to 95 (MLTCNDCSTW…KRSSPLVTPS (95 aa)). The interval 96–112 (IAKPATEVSEENKDFQL) is domain II. The segment at 113–328 (KLNGAYRFDN…GAINKLTAYC (216 aa)) is domain III, AAA+ region. 4 residues coordinate ATP: Gly157, Gly159, Lys160, and Thr161. Residues 329–455 (LLFNKPLTET…IAIDSPQHFV (127 aa)) form a domain IV, binds dsDNA region.

It belongs to the DnaA family. In terms of assembly, oligomerizes as a right-handed, spiral filament on DNA at oriC.

The protein resides in the cytoplasm. In terms of biological role, plays an essential role in the initiation and regulation of chromosomal replication. ATP-DnaA binds to the origin of replication (oriC) to initiate formation of the DNA replication initiation complex once per cell cycle. Binds the DnaA box (a 9 base pair repeat at the origin) and separates the double-stranded (ds)DNA. Forms a right-handed helical filament on oriC DNA; dsDNA binds to the exterior of the filament while single-stranded (ss)DNA is stabiized in the filament's interior. The ATP-DnaA-oriC complex binds and stabilizes one strand of the AT-rich DNA unwinding element (DUE), permitting loading of DNA polymerase. After initiation quickly degrades to an ADP-DnaA complex that is not apt for DNA replication. Binds acidic phospholipids. This Chlamydia trachomatis serovar D (strain ATCC VR-885 / DSM 19411 / UW-3/Cx) protein is Chromosomal replication initiator protein DnaA 2.